The sequence spans 208 residues: Ribosomal RNA small subunit methyltransferase G (208 aa).

S-adenosyl-L-methionine-binding positions include glycine 74, leucine 79, 125-126 (VE), and arginine 140.

The protein belongs to the methyltransferase superfamily. RNA methyltransferase RsmG family.

It is found in the cytoplasm. The enzyme catalyses guanosine(527) in 16S rRNA + S-adenosyl-L-methionine = N(7)-methylguanosine(527) in 16S rRNA + S-adenosyl-L-homocysteine. In terms of biological role, specifically methylates the N7 position of guanine in position 527 of 16S rRNA. This is Ribosomal RNA small subunit methyltransferase G from Shewanella denitrificans (strain OS217 / ATCC BAA-1090 / DSM 15013).